Reading from the N-terminus, the 55-residue chain is MKIIVVLAVLMLVSAQVCLVSAAEMGHSSDNELSSRDLVKRFFLPPCAYKGTCNH.

Residues 1–15 (MKIIVVLAVLMLVSA) form the signal peptide. Residues 16–41 (QVCLVSAAEMGHSSDNELSSRDLVKR) constitute a propeptide that is removed on maturation. Cys-47 and Cys-53 are oxidised to a cystine. Residues 54 to 55 (NH) constitute a propeptide that is removed on maturation.

Expressed by the skin glands.

It is found in the secreted. The protein is Riparin-1.4 of Crinia riparia (Streambank froglet).